A 102-amino-acid polypeptide reads, in one-letter code: MEEALKENIMGALEQVVDPELGVDIVNLGLVYDVDMDEDGLTHITMTLTSMGCPLAPIIVDEVKKALADLPEVKDTEVHIVWNPPWTRDKMSRYAKIALGIQ.

Belongs to the MIP18 family.

Involved in the maturation of iron-sulfur (Fe-S) proteins. May function as a Fe-S cluster carrier. This is Fe-S protein maturation auxiliary factor YitW (yitW) from Bacillus subtilis (strain 168).